The primary structure comprises 151 residues: FAD synthase (151 aa).

Residues 21–22 (TF), 26–29 (HPGH), and Asp-104 contribute to the ATP site.

The protein belongs to the archaeal FAD synthase family. In terms of assembly, homodimer. A divalent metal cation serves as cofactor.

It carries out the reaction FMN + ATP + H(+) = FAD + diphosphate. It participates in cofactor biosynthesis; FAD biosynthesis; FAD from FMN: step 1/1. Its function is as follows. Catalyzes the transfer of the AMP portion of ATP to flavin mononucleotide (FMN) to produce flavin adenine dinucleotide (FAD) coenzyme. This is FAD synthase from Methanosarcina acetivorans (strain ATCC 35395 / DSM 2834 / JCM 12185 / C2A).